The following is a 430-amino-acid chain: Adenylosuccinate synthetase (430 aa).

Residues glycine 12 to lysine 18 and glycine 40 to threonine 42 contribute to the GTP site. Aspartate 13 (proton acceptor) is an active-site residue. Aspartate 13 and glycine 40 together coordinate Mg(2+). IMP is bound by residues aspartate 13–lysine 16, asparagine 38–histidine 41, threonine 128, arginine 142, glutamine 223, threonine 238, and arginine 302. Histidine 41 (proton donor) is an active-site residue. Residue threonine 298–arginine 304 coordinates substrate. GTP-binding positions include arginine 304, serine 330–aspartate 332, and serine 412–glycine 414.

It belongs to the adenylosuccinate synthetase family. Homodimer. The cofactor is Mg(2+).

The protein localises to the cytoplasm. It carries out the reaction IMP + L-aspartate + GTP = N(6)-(1,2-dicarboxyethyl)-AMP + GDP + phosphate + 2 H(+). The protein operates within purine metabolism; AMP biosynthesis via de novo pathway; AMP from IMP: step 1/2. Its function is as follows. Plays an important role in the de novo pathway of purine nucleotide biosynthesis. Catalyzes the first committed step in the biosynthesis of AMP from IMP. The polypeptide is Adenylosuccinate synthetase (Streptococcus uberis (strain ATCC BAA-854 / 0140J)).